The sequence spans 46 residues: PhoP/PhoQ regulator MgrB (46 aa).

The chain crosses the membrane as a helical span at residues 6–26 (WVALVVVVLACLLLWAQVFNM).

Belongs to the MgrB family. In terms of assembly, may form homooligomers. Probably interacts with the periplasmic domain of PhoQ.

It localises to the cell inner membrane. Functionally, phoP-regulated transcription is redox-sensitive, being activated when the periplasm becomes more reducing. MgrB acts between DsbA/DsbB and PhoP/PhoQ in this pathway. Represses PhoP/PhoQ signaling, possibly by binding to the periplasmic domain of PhoQ, altering its activity and that of downstream effector PhoP. The chain is PhoP/PhoQ regulator MgrB from Escherichia coli O6:K15:H31 (strain 536 / UPEC).